Here is a 204-residue protein sequence, read N- to C-terminus: Phosphoribosyl-dephospho-CoA transferase (204 aa).

Residues Asp-129 and Asp-131 contribute to the active site.

The protein belongs to the MdcG family.

The catalysed reaction is apo-[malonate decarboxylase ACP] + 2'-(5''-triphospho-alpha-D-ribosyl)-3'-dephospho-CoA = holo-[malonate decarboxylase ACP] + diphosphate. In terms of biological role, transfers 2'-(5-triphosphoribosyl)-3'-dephosphocoenzyme-A to the apo-[acyl-carrier-protein] of the malonate decarboxylase to yield holo-[acyl-carrier-protein]. The chain is Phosphoribosyl-dephospho-CoA transferase from Pseudomonas putida (Arthrobacter siderocapsulatus).